The primary structure comprises 144 residues: Large ribosomal subunit protein uL15 (144 aa).

Over residues 1–14 (MVVRREKKSRKMRG) the composition is skewed to basic residues. Residues 1 to 35 (MVVRREKKSRKMRGSRTMGWGIRGQHRDRGSQGGR) form a disordered region.

It belongs to the universal ribosomal protein uL15 family. In terms of assembly, part of the 50S ribosomal subunit.

In terms of biological role, binds to the 23S rRNA. The polypeptide is Large ribosomal subunit protein uL15 (Saccharolobus solfataricus (strain ATCC 35092 / DSM 1617 / JCM 11322 / P2) (Sulfolobus solfataricus)).